Consider the following 359-residue polypeptide: Queuine tRNA-ribosyltransferase (359 aa).

The active-site Proton acceptor is Asp-92. Residues 92 to 96 (DSGGF), Asp-146, Gln-189, and Gly-216 each bind substrate. The segment at 245–251 (GVGKPAD) is RNA binding. Catalysis depends on Asp-264, which acts as the Nucleophile. Residues 269–273 (TRSGR) form an RNA binding; important for wobble base 34 recognition region. Zn(2+) contacts are provided by Cys-302, Cys-304, Cys-307, and His-333.

This sequence belongs to the queuine tRNA-ribosyltransferase family. In terms of assembly, homodimer. Within each dimer, one monomer is responsible for RNA recognition and catalysis, while the other monomer binds to the replacement base PreQ1. Zn(2+) serves as cofactor.

It catalyses the reaction 7-aminomethyl-7-carbaguanine + guanosine(34) in tRNA = 7-aminomethyl-7-carbaguanosine(34) in tRNA + guanine. The protein operates within tRNA modification; tRNA-queuosine biosynthesis. Catalyzes the base-exchange of a guanine (G) residue with the queuine precursor 7-aminomethyl-7-deazaguanine (PreQ1) at position 34 (anticodon wobble position) in tRNAs with GU(N) anticodons (tRNA-Asp, -Asn, -His and -Tyr). Catalysis occurs through a double-displacement mechanism. The nucleophile active site attacks the C1' of nucleotide 34 to detach the guanine base from the RNA, forming a covalent enzyme-RNA intermediate. The proton acceptor active site deprotonates the incoming PreQ1, allowing a nucleophilic attack on the C1' of the ribose to form the product. After dissociation, two additional enzymatic reactions on the tRNA convert PreQ1 to queuine (Q), resulting in the hypermodified nucleoside queuosine (7-(((4,5-cis-dihydroxy-2-cyclopenten-1-yl)amino)methyl)-7-deazaguanosine). This chain is Queuine tRNA-ribosyltransferase, found in Rickettsia bellii (strain RML369-C).